We begin with the raw amino-acid sequence, 392 residues long: Selenide, water dikinase 1 (392 aa).

The residue at position 2 (Ser2) is an N-acetylserine. The active site involves Cys31. ATP is bound by residues Lys32, 67–69, Asp87, Asp110, and 161–164; these read GMD and GGQT. Asp69 lines the Mg(2+) pocket. Asp110 provides a ligand contact to Mg(2+). Asp265 is a binding site for Mg(2+).

It belongs to the selenophosphate synthase 1 family. Class II subfamily. In terms of assembly, homodimer. Mg(2+) serves as cofactor.

It localises to the cell membrane. The protein resides in the nucleus membrane. It carries out the reaction hydrogenselenide + ATP + H2O = selenophosphate + AMP + phosphate + 2 H(+). Functionally, synthesizes selenophosphate from selenide and ATP. This chain is Selenide, water dikinase 1 (Sephs1), found in Mus musculus (Mouse).